The primary structure comprises 424 residues: Chloroquine resistance transporter (424 aa).

Residues 1-58 (MKFASKKNNQKNSSKNDERYRELDNLVQEGNGSRLGGGSCLGKCAHVFKLIFKEIKDN) are Cytoplasmic-facing. Residues 59 to 79 (IFIYILSIIYLSVCVMNKIFA) traverse the membrane as a helical segment. The Vacuolar portion of the chain corresponds to 80–90 (KRTLNKIGNYS). A glycan (N-linked (GlcNAc...) asparagine) is linked at Asn88. Residues 91-111 (FVTSETHNFICMIMFFIVYSL) traverse the membrane as a helical segment. The Cytoplasmic segment spans residues 112–127 (FGNKKGNSKERHRSFN). The chain crosses the membrane as a helical span at residues 128-148 (LQFFAISMLDACSVILAFIGL). Residues 149–154 (TRTTGN) are Vacuolar-facing. The chain crosses the membrane as a helical span at residues 155 to 175 (IQSFVLQLSIPINMFFCFLIL). Topologically, residues 176–178 (RYR) are cytoplasmic. A helical membrane pass occupies residues 179-199 (YHLYNYLGAVIIVVTIALVEM). Residues 200–209 (KLSFETQEEN) lie on the Vacuolar side of the membrane. Residues 210–230 (SIIFNLVLISALIPVCFSNMT) traverse the membrane as a helical segment. Over 231–248 (REIVFKKYKIDILRLNAM) the chain is Cytoplasmic. The helical transmembrane segment at 249–269 (VSFFQLFTSCLILPVYTLPFL) threads the bilayer. The Vacuolar segment spans residues 270–317 (KQLHLPYNEIWTNIKNGFACLFLGRNTVVENCGLGMAKLCDDCDGAWK). Intrachain disulfides connect Cys289–Cys312 and Cys301–Cys309. Residues 318-338 (TFALFSFFNICDNLITSYIID) traverse the membrane as a helical segment. The Cytoplasmic segment spans residues 339–346 (KFSTMTYT). Residues 347–367 (IVSCIQGPAIAIAYYFKFLAG) traverse the membrane as a helical segment. Over 368–377 (DVVREPRLLD) the chain is Vacuolar. The helical transmembrane segment at 378-398 (FVTLFGYLFGSIIYRVGNIIL) threads the bilayer. The Cytoplasmic segment spans residues 399–424 (ERKKMRNEENEDSEGELTNVDSIITQ).

Belongs to the CRT-like transporter family. As to quaternary structure, monomer.

The protein localises to the vacuole membrane. It catalyses the reaction L-arginine(in) = L-arginine(out). It carries out the reaction L-lysine(in) = L-lysine(out). The enzyme catalyses L-histidine(out) = L-histidine(in). The catalysed reaction is histamine(out) = histamine(in). It catalyses the reaction spermidine(in) = spermidine(out). It carries out the reaction Fe(3+)(in) = Fe(3+)(out). The enzyme catalyses Fe(2+)(in) = Fe(2+)(out). Its activity is regulated as follows. Transporter activity is trans-stimulated by host-derived peptides containing 4-11 amino acids. Trans-stimulation by hemoglobin-derived peptide VDPVNF is pH-dependent and sodium-independent. Saquinavir trans-stimulates transport of hemoglobin-derived peptide VDPVNF. Protons are non-competitive inhibitors of chloroquine transport. Its function is as follows. Nutrient transporter. Substrate transport is pH-dependent. Can transport arginine, lysine, histidine, peptides, histamine and spermidine. May modulate activity of endogenous transporters. Involved in maintaining the osmotic homeostasis of the digestive vacuole. Required for the asexual intraerythrocytic proliferation of parasites. Can transport Fe(2+) and Fe(3+). The sequence is that of Chloroquine resistance transporter from Plasmodium falciparum.